A 543-amino-acid polypeptide reads, in one-letter code: Malate synthase (543 aa).

Belongs to the malate synthase family. As to quaternary structure, homodimer.

It localises to the cytoplasm. The catalysed reaction is glyoxylate + acetyl-CoA + H2O = (S)-malate + CoA + H(+). Its pathway is carbohydrate metabolism; glyoxylate cycle; (S)-malate from isocitrate: step 2/2. The protein is Malate synthase (aceB) of Streptomyces arenae.